A 229-amino-acid chain; its full sequence is Heptaprenylglyceryl phosphate synthase (229 aa).

Sn-glycerol 1-phosphate is bound at residue Lys12. Positions 14 and 40 each coordinate Mg(2+). Residues 159-164, Gly189, and 209-210 contribute to the sn-glycerol 1-phosphate site; these read YLEYSG and GN.

This sequence belongs to the GGGP/HepGP synthase family. Group I subfamily. As to quaternary structure, homodimer. The cofactor is Mg(2+).

The catalysed reaction is sn-glycerol 1-phosphate + all-trans-heptaprenyl diphosphate = 3-heptaprenyl-sn-glycero-1-phosphate + diphosphate. It participates in membrane lipid metabolism; glycerophospholipid metabolism. In terms of biological role, prenyltransferase that catalyzes in vivo the transfer of the heptaprenyl moiety of heptaprenyl pyrophosphate (HepPP; 35 carbon atoms) to the C3 hydroxyl of sn-glycerol-1-phosphate (G1P), producing heptaprenylglyceryl phosphate (HepGP). This reaction is an ether-bond-formation step in the biosynthesis of archaea-type G1P-based membrane lipids found in Bacillales. The polypeptide is Heptaprenylglyceryl phosphate synthase (Bacillus cereus (strain B4264)).